We begin with the raw amino-acid sequence, 1478 residues long: Fanconi anemia group D2 protein homolog (1478 aa).

The disordered stretch occupies residues 33-53 (NISVESSSGGSEENIPASQEH). Residues 35 to 45 (SVESSSGGSEE) show a composition bias toward low complexity. Residue K595 forms a Glycyl lysine isopeptide (Lys-Gly) (interchain with G-Cter in ubiquitin) linkage. Disordered stretches follow at residues 896–918 (NQNQKRPGPKPAAKLNATLPEPD) and 1420–1478 (TPRS…SKCF). Positions 1429–1442 (ENSDDELPADDTSV) are enriched in acidic residues. The span at 1468-1478 (RSKSSSRSKCF) shows a compositional bias: basic residues.

The protein belongs to the Fanconi anemia protein FANCD2 family. As to quaternary structure, homodimer; cannot be ubiquitinated and does not bind DNA. Part of a Fanci-Fancd2 heterodimeric complex that binds and scans dsDNA for DNA damage. Interacts with Fancl (via C-terminus). In terms of processing, monoubiquitinated by Fancl in response to ionising radiation.

Its subcellular location is the nucleus. In terms of biological role, required for maintenance of chromosomal stability. Together with Fancl, and probably Fanci, involved in DNA repair of damage caused by agents that induce interstrand cross-links but not agents that cause double strand breaks. Required for S phase checkpoint activation in response to ionizing radiation induced DNA damage. This is Fanconi anemia group D2 protein homolog from Drosophila melanogaster (Fruit fly).